Here is a 559-residue protein sequence, read N- to C-terminus: Pentatricopeptide repeat-containing protein At2g42920, chloroplastic (559 aa).

The transit peptide at 1 to 14 (MSPTILSFSGVTVP) directs the protein to the chloroplast. PPR repeat units lie at residues 88 to 122 (NPFVWNTIIRGFSRSSFPEMAISIFIDMLCSSPSV), 125 to 159 (QRLTYPSVFKAYGRLGQARDGRQLHGMVIKEGLED), 160 to 190 (DSFIRNTMLHMYVTCGCLIEAWRIFLGMIGF), 191 to 221 (DVVAWNSMIMGFAKCGLIDQAQNLFDEMPQR), 222 to 256 (NGVSWNSMISGFVRNGRFKDALDMFREMQEKDVKP), 257 to 291 (DGFTMVSLLNACAYLGASEQGRWIHEYIVRNRFEL), 292 to 322 (NSIVVTALIDMYCKCGCIEEGLNVFECAPKK), 323 to 357 (QLSCWNSMILGLANNGFEERAMDLFSELERSGLEP), 358 to 388 (DSVSFIGVLTACAHSGEVHRADEFFRLMKEK), and 394 to 424 (SIKHYTLMVNVLGGAGLLEEAEALIKNMPVE). The interval 429-504 (IWSSLLSACR…EVGCSSIEVD (76 aa)) is type E motif. Residues 505-535 (FEVHEFISCGGTHPKSAEIYSLLDILNWDVS) form a type E(+) motif region.

This sequence belongs to the PPR family. PCMP-E subfamily.

The protein resides in the plastid. Its subcellular location is the chloroplast. The protein is Pentatricopeptide repeat-containing protein At2g42920, chloroplastic (PCMP-E75) of Arabidopsis thaliana (Mouse-ear cress).